Consider the following 180-residue polypeptide: Cytokinin-beta-glucosidase 1 (180 aa).

Its function is as follows. Hydrolyzes cytokinin glucosides thus liberating free cytokinins. This Panax ginseng (Korean ginseng) protein is Cytokinin-beta-glucosidase 1 (ROLC1).